Consider the following 512-residue polypeptide: Kelch repeat protein C2 (512 aa).

The 66-residue stretch at 2–67 (ESVIFSINGE…MRWKKINITI (66 aa)) folds into the BTB domain. The region spanning 102–176 (CIRMFNFSKR…LLKWIHKNPN (75 aa)) is the BACK domain. Kelch repeat units follow at residues 216 to 261 (IKHN…LHNC), 262 to 307 (LYII…VNNG), 309 to 354 (LYVI…FVND), 356 to 403 (IYVM…EYDG), 405 to 449 (IYVI…SCGD), and 452 to 498 (LIIA…THKS).

The protein belongs to the poxviruses Kelch family.

This is Kelch repeat protein C2 from Rabbitpox virus (strain Utrecht) (RPV).